A 340-amino-acid polypeptide reads, in one-letter code: Glyceraldehyde-3-phosphate dehydrogenase 2 (340 aa).

NADP(+) is bound by residues 12–13, arginine 78, and threonine 120; that span reads RI. Residues 151–153 and threonine 182 contribute to the D-glyceraldehyde 3-phosphate site; that span reads SCT. Cysteine 152 serves as the catalytic Nucleophile. Asparagine 183 contributes to the NADP(+) binding site. Residues arginine 197, 210 to 211, and arginine 233 contribute to the D-glyceraldehyde 3-phosphate site; that span reads TG. Asparagine 315 is an NADP(+) binding site.

This sequence belongs to the glyceraldehyde-3-phosphate dehydrogenase family. In terms of assembly, homotetramer. Interacts with BrxC. Post-translationally, in response to oxidative stress, the active site Cys likely reacts with bacillithiol (BSH) to form mixed disulfides to protect the Cys residue against overoxidation. S-bacillithiolation presumably leads to loss of catalytic activity. Debacillithiolation by monothiol bacilliredoxin BrxC restores the activity.

It localises to the cytoplasm. The catalysed reaction is D-glyceraldehyde 3-phosphate + phosphate + NADP(+) = (2R)-3-phospho-glyceroyl phosphate + NADPH + H(+). It carries out the reaction D-glyceraldehyde 3-phosphate + phosphate + NAD(+) = (2R)-3-phospho-glyceroyl phosphate + NADH + H(+). It functions in the pathway carbohydrate biosynthesis; gluconeogenesis. Involved in the gluconeogenesis. Catalyzes the oxidative phosphorylation of glyceraldehyde 3-phosphate (G3P) to 1,3-bisphosphoglycerate (BPG) using the cofactor NADP. The first reaction step involves the formation of a hemiacetal intermediate between G3P and a cysteine residue, and this hemiacetal intermediate is then oxidized to a thioester, with concomitant reduction of NADP to NADPH. The reduced NADPH is then exchanged with the second NADP, and the thioester is attacked by a nucleophilic inorganic phosphate to produce BPG. This chain is Glyceraldehyde-3-phosphate dehydrogenase 2, found in Bacillus subtilis (strain 168).